Here is a 501-residue protein sequence, read N- to C-terminus: Phosphatase and actin regulator 1 (501 aa).

One copy of the RPEL 1 repeat lies at 1 to 18 (MRQSREELIKRGVLKEIF). 2 disordered regions span residues 21–46 (DGELSIPNEEGALENGQPLGSGQVLS) and 295–329 (DNKENVPHEADYEDSSCLYPRQEEEEEEDEDEDNS). The segment covering 36–46 (GQPLGSGQVLS) has biased composition (low complexity). Over residues 295–304 (DNKENVPHEA) the composition is skewed to basic and acidic residues. Over residues 317–328 (EEEEEEDEDEDN) the composition is skewed to acidic residues. RPEL repeat units lie at residues 343–368 (DSLAIKLSNRPSKRELEEKNILPMQT), 381–406 (TKLTRRLSQRPTAEELEQRNILKPRN), and 419–444 (RRLTRKLSQRPTVEELRERKILIRFS). A disordered region spans residues 382 to 415 (KLTRRLSQRPTAEELEQRNILKPRNEQEEQEEKR). Positions 392–415 (TAEELEQRNILKPRNEQEEQEEKR) are enriched in basic and acidic residues.

It belongs to the phosphatase and actin regulator family. In terms of assembly, interacts (via RPEL repeats) with ACTA1. In terms of tissue distribution, expressed in the gizzard, and in neurons from central and peripheral nervous systems.

The protein resides in the cytoplasm. It is found in the synapse. Its subcellular location is the nucleus. Functionally, binds actin monomers (G actin) and plays a role in the reorganization of the actin cytoskeleton and in formation of actin stress fibers. The protein is Phosphatase and actin regulator 1 (PHACTR1) of Gallus gallus (Chicken).